The following is a 180-amino-acid chain: Ribulose bisphosphate carboxylase small subunit, chloroplastic 3 (180 aa).

The transit peptide at 1–56 (MASSVMSSAAVATRGNGAQASMVAPFTGLKSTASFPVSRKQNLDITSIASNGGRVS) directs the protein to the chloroplast.

Belongs to the RuBisCO small chain family. As to quaternary structure, heterohexadecamer of 8 large and 8 small subunits. In terms of assembly, (Microbial infection) Binds to tobamovirus movement protein; this interaction seems required for viral systemic movement.

The protein localises to the plastid. It localises to the chloroplast. It is found in the cell junction. Its subcellular location is the plasmodesma. In terms of biological role, ruBisCO catalyzes two reactions: the carboxylation of D-ribulose 1,5-bisphosphate, the primary event in carbon dioxide fixation, as well as the oxidative fragmentation of the pentose substrate. Both reactions occur simultaneously and in competition at the same active site. Although the small subunit is not catalytic it is essential for maximal activity. Involved in antiviral defenses. This chain is Ribulose bisphosphate carboxylase small subunit, chloroplastic 3, found in Solanum lycopersicum (Tomato).